The primary structure comprises 240 residues: MNAEKSPENHNVDHEEIAKFEAVASRWWDLEGEFKPLHRINPLRLGYIAERAGGLFGKKVLDVGCGGGILAESMAREGATVTGLDMGFEPLQVAKLHALESGIQVDYVQETVEEHAAKHAGQYDVVTCMEMLEHVPDPQSVVRACAQLVKPGGDVFFSTLNRNGKSWLMAVVGAEYILRMVPKGTHDVKKFIKPAELLGWVDQTSLKERHITGLHYNPLTNTFKLGPGVDVNYMLHTQNK.

4 residues coordinate S-adenosyl-L-methionine: Arg44, Gly64, Asp85, and Met129.

The protein belongs to the methyltransferase superfamily. UbiG/COQ3 family.

The catalysed reaction is a 3-demethylubiquinol + S-adenosyl-L-methionine = a ubiquinol + S-adenosyl-L-homocysteine + H(+). It catalyses the reaction a 3-(all-trans-polyprenyl)benzene-1,2-diol + S-adenosyl-L-methionine = a 2-methoxy-6-(all-trans-polyprenyl)phenol + S-adenosyl-L-homocysteine + H(+). It participates in cofactor biosynthesis; ubiquinone biosynthesis. Its function is as follows. O-methyltransferase that catalyzes the 2 O-methylation steps in the ubiquinone biosynthetic pathway. In Escherichia coli O8 (strain IAI1), this protein is Ubiquinone biosynthesis O-methyltransferase.